Reading from the N-terminus, the 388-residue chain is Chorismate synthase (388 aa).

Residues Arg-39 and Arg-45 each contribute to the NADP(+) site. FMN-binding positions include 130–132, 251–252, Gly-296, 311–315, and Arg-337; these read RSS, NA, and KPIPT.

The protein belongs to the chorismate synthase family. Homotetramer. It depends on FMNH2 as a cofactor.

The enzyme catalyses 5-O-(1-carboxyvinyl)-3-phosphoshikimate = chorismate + phosphate. It functions in the pathway metabolic intermediate biosynthesis; chorismate biosynthesis; chorismate from D-erythrose 4-phosphate and phosphoenolpyruvate: step 7/7. Catalyzes the anti-1,4-elimination of the C-3 phosphate and the C-6 proR hydrogen from 5-enolpyruvylshikimate-3-phosphate (EPSP) to yield chorismate, which is the branch point compound that serves as the starting substrate for the three terminal pathways of aromatic amino acid biosynthesis. This reaction introduces a second double bond into the aromatic ring system. The sequence is that of Chorismate synthase from Streptococcus sanguinis (strain SK36).